A 257-amino-acid polypeptide reads, in one-letter code: Alkaline phosphatase synthesis transcriptional regulatory protein SphR (257 aa).

A Response regulatory domain is found at 25–148 (RILVVEDEAV…ELVARCRALL (124 aa)). Asp-83 is subject to 4-aspartylphosphate. The segment at residues 159–257 (PAVLRYEGLK…TVRGFGYRLG (99 aa)) is a DNA-binding region (ompR/PhoB-type).

Post-translationally, phosphorylated by SphS.

Functionally, member of the two-component regulatory system SphR/SphS. Response regulator. Involved in inducible production of alkaline phosphatase in response to phosphate limitation as it is directly involved in the regulation of phoA transcription in response to phosphate limitation. Binds to two distinct sites upstream from the phoA promoter. In Synechococcus elongatus (strain ATCC 33912 / PCC 7942 / FACHB-805) (Anacystis nidulans R2), this protein is Alkaline phosphatase synthesis transcriptional regulatory protein SphR (sphR).